Consider the following 101-residue polypeptide: UPF0235 protein Cpha266_2081 (101 aa).

This sequence belongs to the UPF0235 family.

The protein is UPF0235 protein Cpha266_2081 of Chlorobium phaeobacteroides (strain DSM 266 / SMG 266 / 2430).